The chain runs to 213 residues: Protein HSH49 (213 aa).

RRM domains lie at 9-88 and 108-185; these read NTVY…QVTN and AKLF…YAFK.

As to quaternary structure, interacts with RDS3.

The protein resides in the nucleus. In terms of biological role, possible SF3b-like factor. The sequence is that of Protein HSH49 (HSH49) from Saccharomyces cerevisiae (strain ATCC 204508 / S288c) (Baker's yeast).